Reading from the N-terminus, the 217-residue chain is Probable transaldolase (217 aa).

Lys83 (schiff-base intermediate with substrate) is an active-site residue.

The protein belongs to the transaldolase family. Type 3B subfamily.

The protein resides in the cytoplasm. The catalysed reaction is D-sedoheptulose 7-phosphate + D-glyceraldehyde 3-phosphate = D-erythrose 4-phosphate + beta-D-fructose 6-phosphate. The protein operates within carbohydrate degradation; pentose phosphate pathway; D-glyceraldehyde 3-phosphate and beta-D-fructose 6-phosphate from D-ribose 5-phosphate and D-xylulose 5-phosphate (non-oxidative stage): step 2/3. Its function is as follows. Transaldolase is important for the balance of metabolites in the pentose-phosphate pathway. The chain is Probable transaldolase from Caldicellulosiruptor saccharolyticus (strain ATCC 43494 / DSM 8903 / Tp8T 6331).